The following is an 827-amino-acid chain: Periplasmic nitrate reductase (827 aa).

The tat-type signal signal peptide spans Met-1–Ala-33. Residues Ile-37–Asp-93 enclose the 4Fe-4S Mo/W bis-MGD-type domain. Residues Cys-44, Cys-47, Cys-51, and Cys-79 each coordinate [4Fe-4S] cluster. Mo-bis(molybdopterin guanine dinucleotide) is bound by residues Lys-81, Gln-148, Asn-173, Cys-177, Trp-210 to Met-217, Ser-241 to His-245, Gln-260 to Asp-262, Met-370, Gln-374, Asn-480, Ser-506 to Asp-507, Lys-529, Asp-556, and Thr-716 to Thr-725. Phe-792 is a binding site for substrate. Mo-bis(molybdopterin guanine dinucleotide) contacts are provided by Asn-800 and Lys-817.

Belongs to the prokaryotic molybdopterin-containing oxidoreductase family. NasA/NapA/NarB subfamily. In terms of assembly, component of the periplasmic nitrate reductase NapAB complex composed of NapA and NapB. Requires [4Fe-4S] cluster as cofactor. It depends on Mo-bis(molybdopterin guanine dinucleotide) as a cofactor. Post-translationally, predicted to be exported by the Tat system. The position of the signal peptide cleavage has not been experimentally proven.

It localises to the periplasm. The enzyme catalyses 2 Fe(II)-[cytochrome] + nitrate + 2 H(+) = 2 Fe(III)-[cytochrome] + nitrite + H2O. Functionally, catalytic subunit of the periplasmic nitrate reductase complex NapAB. Receives electrons from NapB and catalyzes the reduction of nitrate to nitrite. This is Periplasmic nitrate reductase from Haemophilus influenzae (strain PittEE).